Consider the following 50-residue polypeptide: Photosystem II reaction center protein M (50 aa).

Residues 7-27 form a helical membrane-spanning segment; it reads GFVASLLFVGIPTIFLIGLFI.

It belongs to the PsbM family. As to quaternary structure, PSII is composed of 1 copy each of membrane proteins PsbA, PsbB, PsbC, PsbD, PsbE, PsbF, PsbH, PsbI, PsbJ, PsbK, PsbL, PsbM, PsbT, PsbX, PsbY, Psb30/Ycf12, peripheral proteins PsbO, CyanoQ (PsbQ), PsbU, PsbV and a large number of cofactors. It forms dimeric complexes.

It is found in the cellular thylakoid membrane. In terms of biological role, one of the components of the core complex of photosystem II (PSII). PSII is a light-driven water:plastoquinone oxidoreductase that uses light energy to abstract electrons from H(2)O, generating O(2) and a proton gradient subsequently used for ATP formation. It consists of a core antenna complex that captures photons, and an electron transfer chain that converts photonic excitation into a charge separation. This subunit is found at the monomer-monomer interface. The polypeptide is Photosystem II reaction center protein M (Prochlorococcus marinus subsp. pastoris (strain CCMP1986 / NIES-2087 / MED4)).